The following is a 731-amino-acid chain: Catalase-peroxidase (731 aa).

Residues 1 to 23 are disordered; the sequence is MSDLKCPFSGHTGAVTPAGNTNN. Positions 95–218 form a cross-link, tryptophyl-tyrosyl-methioninium (Trp-Tyr) (with M-244); sequence WHSAGTYRTG…LAAVEMGLIY (124 aa). Catalysis depends on H96, which acts as the Proton acceptor. The tryptophyl-tyrosyl-methioninium (Tyr-Met) (with W-95) cross-link spans 218-244; that stretch reads YVNPEGPHGEPDPVASGRDVRETFARM. H259 serves as a coordination point for heme b.

Belongs to the peroxidase family. Peroxidase/catalase subfamily. In terms of assembly, homodimer or homotetramer. It depends on heme b as a cofactor. Post-translationally, formation of the three residue Trp-Tyr-Met cross-link is important for the catalase, but not the peroxidase activity of the enzyme.

It catalyses the reaction H2O2 + AH2 = A + 2 H2O. The enzyme catalyses 2 H2O2 = O2 + 2 H2O. Bifunctional enzyme with both catalase and broad-spectrum peroxidase activity. In Synechococcus sp. (strain WH7803), this protein is Catalase-peroxidase.